The following is a 421-amino-acid chain: Synaptotagmin-1 (421 aa).

Residues 1 to 40 (MVSESHHEALAAPPATTVAAAPPSNVTEPASPGGGGGKED) form a disordered region. The Vesicular portion of the chain corresponds to 1–60 (MVSESHHEALAAPPATTVAAAPPSNVTEPASPGGGGGKEDAFSKLKEKFMNELNKIPLPP). The segment covering 10–23 (LAAPPATTVAAAPP) has biased composition (low complexity). Residue Asn25 is glycosylated (N-linked (GlcNAc...) asparagine). A helical transmembrane segment spans residues 61–81 (WALIAIAIVAVLLILTCCFCL). Residues Cys77, Cys78, Cys80, Cys82, and Cys85 are each lipidated (S-palmitoyl cysteine). Residues 82–421 (CKKCLFKKKN…EVDAMLAVKK (340 aa)) are Cytoplasmic-facing. The segment at 94-139 (KGKEKGGKNAINMKDVKDLGKTMKDQDDDAETGLTDGEEKEEPKEV) is disordered. Basic and acidic residues predominate over residues 107–118 (KDVKDLGKTMKD). Over residues 119–133 (QDDDAETGLTDGEEK) the composition is skewed to acidic residues. Positions 135-381 (EPKEVEKLGK…AIGKVFVGYN (247 aa)) are phospholipid binding. C2 domains follow at residues 141-260 (KLGK…EEWR) and 272-405 (KLGD…AQWH). 14 residues coordinate Ca(2+): Leu171, Asp172, Asp178, Asp230, Phe231, Asp232, Ser235, Lys236, Asp238, Asp303, Asp309, Asp363, Asp365, and Asp371.

It belongs to the synaptotagmin family. As to quaternary structure, homotetramer. It depends on Ca(2+) as a cofactor.

It localises to the cytoplasmic vesicle. The protein localises to the secretory vesicle membrane. Its subcellular location is the secretory vesicle. It is found in the synaptic vesicle membrane. The protein resides in the chromaffin granule membrane. It localises to the cytoplasm. Its function is as follows. Calcium sensor that participates in triggering neurotransmitter release at the synapse. May have a regulatory role in the membrane interactions during trafficking of synaptic vesicles at the active zone of the synapse. It binds acidic phospholipids with a specificity that requires the presence of both an acidic head group and a diacyl backbone. May play a role in dendrite formation by melanocytes. May play a role in regulating the secretion of hormones relevant to the reproduction and egg-laying of female geese. This chain is Synaptotagmin-1, found in Anser cygnoides (Swan goose).